A 365-amino-acid polypeptide reads, in one-letter code: MTKMSKLPNDLLEEILSRSPLYSMRAIRLTCKKWNTLAKEESFTKKQLVQTKAAKEFMVIMMMDSKFCLMNINLNKEEDVEPSIKCNGKIINPIGMCRVYHCGGLVCITKSFSNTRDVVWNPYLGQTRWIKPRSHHAYIYAIGYETKKSCRSYKILSSEHNYINIDDERVDYEIYELDSNSWRALDVNSNWATAFYKMDVSVKGNSYTYTDYRGDFLISFDFTTERFGPTLPLPFHSRCGDIVALSSVREEKLAVLLHRCNISRMEIWITNKIEPNNVSWGKLFLTVDMKPLIIDDGIFFIDEEKKVVVVFDKDKEMRNRITAYIIGENGYFRKVDLGDSESFPVRCSYVPSSVEIKQLAKGKSN.

An F-box domain is found at Met-1 to Gln-47. Kelch repeat units follow at residues Arg-98 to Ser-149 and Ile-155 to Asn-205.

This chain is Putative F-box/kelch-repeat protein At3g16880, found in Arabidopsis thaliana (Mouse-ear cress).